Consider the following 211-residue polypeptide: MTTAVILGLLALISYLLGSIPTGYLLAKALRGIDIREHGSGSTGATNVLRVVGKGPGLVTFLVDVGKGLGAILVARWVLGQAWSPVPAGWFEFVLLAIAFIAVLAHSKPIWLGWRGGKSVATGLGVLLALNAPTALATFGVFLVVLAVSRIVSLSSMTAAIALPFWFWFFTQSWPFVGFSVIAGAFVIWRHQSNIQRLLAGTEPRLGASQG.

5 helical membrane passes run 5 to 25, 55 to 75, 85 to 105, 126 to 146, and 168 to 188; these read VILG…TGYL, GPGL…ILVA, PVPA…AVLA, VLLA…LVVL, and WFFT…AFVI.

It belongs to the PlsY family. Probably interacts with PlsX.

It localises to the cell inner membrane. It catalyses the reaction an acyl phosphate + sn-glycerol 3-phosphate = a 1-acyl-sn-glycero-3-phosphate + phosphate. Its pathway is lipid metabolism; phospholipid metabolism. In terms of biological role, catalyzes the transfer of an acyl group from acyl-phosphate (acyl-PO(4)) to glycerol-3-phosphate (G3P) to form lysophosphatidic acid (LPA). This enzyme utilizes acyl-phosphate as fatty acyl donor, but not acyl-CoA or acyl-ACP. The protein is Glycerol-3-phosphate acyltransferase of Thermosynechococcus vestitus (strain NIES-2133 / IAM M-273 / BP-1).